Consider the following 249-residue polypeptide: 5'-nucleotidase SurE (249 aa).

A divalent metal cation is bound by residues aspartate 8, aspartate 9, serine 39, and asparagine 96.

This sequence belongs to the SurE nucleotidase family. It depends on a divalent metal cation as a cofactor.

The protein localises to the cytoplasm. It catalyses the reaction a ribonucleoside 5'-phosphate + H2O = a ribonucleoside + phosphate. Nucleotidase that shows phosphatase activity on nucleoside 5'-monophosphates. This is 5'-nucleotidase SurE from Clostridium tetani (strain Massachusetts / E88).